The primary structure comprises 562 residues: Arginine--tRNA ligase (562 aa).

A 'HIGH' region motif is present at residues 129 to 139; sequence ANPTGPLHVGH.

Belongs to the class-I aminoacyl-tRNA synthetase family. Monomer.

The protein resides in the cytoplasm. The enzyme catalyses tRNA(Arg) + L-arginine + ATP = L-arginyl-tRNA(Arg) + AMP + diphosphate. This chain is Arginine--tRNA ligase, found in Xylella fastidiosa (strain M23).